Here is a 318-residue protein sequence, read N- to C-terminus: Methenyltetrahydromethanopterin cyclohydrolase (318 aa).

Belongs to the MCH family.

The protein resides in the cytoplasm. It catalyses the reaction 5,10-methenyl-5,6,7,8-tetrahydromethanopterin + H2O = N(5)-formyl-5,6,7,8-tetrahydromethanopterin + H(+). It participates in one-carbon metabolism; methanogenesis from CO(2); 5,10-methenyl-5,6,7,8-tetrahydromethanopterin from CO(2): step 3/3. Functionally, catalyzes the reversible interconversion of 5-formyl-H(4)MPT to methenyl-H(4)MPT(+). The chain is Methenyltetrahydromethanopterin cyclohydrolase from Methanocella arvoryzae (strain DSM 22066 / NBRC 105507 / MRE50).